The following is an 84-amino-acid chain: Large ribosomal subunit protein bL27 (84 aa).

The segment at 1–22 (MAHKKAGGSTRNGRDSESKRLG) is disordered.

This sequence belongs to the bacterial ribosomal protein bL27 family.

This Shewanella frigidimarina (strain NCIMB 400) protein is Large ribosomal subunit protein bL27.